Consider the following 681-residue polypeptide: uncharacterized protein (681 aa).

This sequence belongs to the protein kinase superfamily. ADCK protein kinase family.

This is an uncharacterized protein from Synechocystis sp. (strain ATCC 27184 / PCC 6803 / Kazusa).